Consider the following 307-residue polypeptide: Nucleotide-binding protein Acid345_3782 (307 aa).

Position 31–38 (31–38) interacts with ATP; that stretch reads GLSGSGKA. Residue 81–84 participates in GTP binding; it reads DIRE.

It belongs to the RapZ-like family.

Displays ATPase and GTPase activities. This is Nucleotide-binding protein Acid345_3782 from Koribacter versatilis (strain Ellin345).